A 364-amino-acid polypeptide reads, in one-letter code: FK506-binding protein 4 (364 aa).

Disordered stretches follow at residues 92-148 (SMFG…DDEI) and 168-239 (EADK…PTKP). Over residues 94–148 (FGDDEHGEDEDNEEEEGEEGEDEEMEGEDEDEDEEDEDEEDEDEEEEDDEEDDEI) the composition is skewed to acidic residues. Residues 168 to 184 (EADKNKQQKKPKQEEPV) are compositionally biased toward basic and acidic residues. The segment covering 185–239 (KQVTPVKPTAQAAKPTAATTTTTTTTTTTPTKQTTPAKPAAKPVTPTKPVTPTKP) has biased composition (low complexity). Residues 277–363 (GKKVGVKYIG…IFDVELVSCA (87 aa)) form the PPIase FKBP-type domain.

This sequence belongs to the FKBP-type PPIase family. As to quaternary structure, binds to histones H3 and H4.

Its subcellular location is the nucleus. It catalyses the reaction [protein]-peptidylproline (omega=180) = [protein]-peptidylproline (omega=0). Inhibited by both FK506 and rapamycin. Functionally, PPIase that acts as a histone chaperone. Histone proline isomerase that increases the rate of cis-trans isomerization at prolines on the histone H3 N-terminal tail. Proline isomerization influences H3 methylation thereby regulating gene expression. In Dictyostelium discoideum (Social amoeba), this protein is FK506-binding protein 4 (fkbp4).